The chain runs to 181 residues: Negative modulator of initiation of replication (181 aa).

Interaction with DNA regions lie at residues 87–88 (AV), 116–120 (RTRVY), and 150–156 (NTNTGRK).

It belongs to the SeqA family. In terms of assembly, homodimer. Polymerizes to form helical filaments.

It is found in the cytoplasm. Its function is as follows. Negative regulator of replication initiation, which contributes to regulation of DNA replication and ensures that replication initiation occurs exactly once per chromosome per cell cycle. Binds to pairs of hemimethylated GATC sequences in the oriC region, thus preventing assembly of replication proteins and re-initiation at newly replicated origins. Repression is relieved when the region becomes fully methylated. The sequence is that of Negative modulator of initiation of replication from Shigella flexneri.